A 2541-amino-acid chain; its full sequence is Talin-1 (2541 aa).

Residues 86–403 (RPLKIRMLDG…GYIDIILKKK (318 aa)) enclose the FERM domain. The tract at residues 280-435 (FMAHKNCGNM…PKKSTVLQQQ (156 aa)) is interaction with LAYN. The tract at residues 482–655 (RGHMPPLTSA…QTSGELLQQI (174 aa)) is helical bundle R1. Positions 656–786 (GESDTDPRFQ…ALNDLLQHIK (131 aa)) are helical bundle R2. The tract at residues 787-911 (QHATGGQPIG…NAAAQNAIKK (125 aa)) is helical bundle R3. Positions 913 to 1043 (LVHKLEHAAK…RTAAQKAQEA (131 aa)) are helical bundle R4. Positions 1045–1205 (GPLEIDSALG…NRCVNCLPGQ (161 aa)) are helical bundle R5. A helical bundle R6 region spans residues 1206–1356 (RDVDAAIRMV…QLITMCTQQA (151 aa)). Residues 1357-1452 (PGQKECDNAL…AYLVGVSDPN (96 aa)) form a helical bundle R7A region. Residues 1358–1658 (GQKECDNALR…NMRDKAPGQR (301 aa)) form an interaction with VCL and F-actin region. The interval 1460-1579 (LVDPTQFARA…NLTAFASNPE (120 aa)) is helical bundle R8. Threonine 1486 is a glycosylation site (O-linked (GlcNAc) threonine). A helical bundle R7B region spans residues 1580–1652 (FATVPAQISP…IKKLITNMRD (73 aa)). The helical bundle R9 stretch occupies residues 1654 to 1821 (APGQRECDEA…TLNEAASAAG (168 aa)). Residues 1822–1972 (VVGGMVDSIT…VLAALQAGNR (151 aa)) form a helical bundle R10 region. A glycan (O-linked (GlcNAc) threonine) is linked at threonine 1889. Residues 1973 to 2139 (GTQACITAAS…TVKAVEDEAT (167 aa)) are helical bundle R11. The helical bundle R12 stretch occupies residues 2140 to 2293 (KGTRALEATI…QAAEAMKGTE (154 aa)). In terms of domain architecture, I/LWEQ spans 2292–2531 (TEWVDPEDPT…MIRQQQYKFL (240 aa)). A helical bundle R13 region spans residues 2299–2481 (DPTVIAENEL…AAQKAAAFQD (183 aa)).

As to quaternary structure, interacts with PIP5K1C and NRAP. Binds with high affinity to vinculin VCL and with low affinity to integrins. Interacts with APBB1IP; this inhibits VCL binding. Interacts with F-actin. Interacts with LAYN. Interacts with THSD1. Phosphorylated.

Its subcellular location is the cell projection. The protein resides in the ruffle membrane. It is found in the cytoplasm. The protein localises to the cytoskeleton. It localises to the cell surface. Its subcellular location is the cell junction. The protein resides in the focal adhesion. In terms of biological role, high molecular weight cytoskeletal protein concentrated at regions of cell-substratum contact and, in lymphocytes, at cell-cell contacts. Involved in connections of major cytoskeletal structures to the plasma membrane. The chain is Talin-1 (TLN1) from Gallus gallus (Chicken).